The chain runs to 354 residues: Zinc finger protein 346 (354 aa).

Matrin-type zinc fingers lie at residues 34–64 (TQCK…KVRR), 95–125 (KCCP…NLRL), 165–195 (KFCK…QETK), and 232–262 (FSCD…QLMS). Positions 36, 39, 52, 58, 97, 100, 113, and 119 each coordinate Zn(2+). Residues 263 to 343 (MTPLSKEGPP…QPYVREDMMG (81 aa)) form a disordered region. Low complexity-rich tracts occupy residues 270–289 (GPPA…TGGA) and 310–323 (GPSS…MGGL). Over residues 324-333 (MPPPYPPPHS) the composition is skewed to pro residues.

The protein localises to the nucleus. The protein resides in the cytoplasm. Binds preferentially to dsRNA, but also to RNA-DNA hybrids. The protein is Zinc finger protein 346 of Xenopus tropicalis (Western clawed frog).